Consider the following 628-residue polypeptide: Chaperone protein HtpG (628 aa).

Positions 1-340 (MSTETLQKET…SADLPLNVSR (340 aa)) are a; substrate-binding. The tract at residues 341–557 (EILQHSKDIE…EHDLSGNLER (217 aa)) is b. The tract at residues 558–628 (LLKAAGQKTP…FVRRVNAMLA (71 aa)) is c.

Belongs to the heat shock protein 90 family. In terms of assembly, homodimer.

It is found in the cytoplasm. In terms of biological role, molecular chaperone. Has ATPase activity. This Methylobacillus flagellatus (strain ATCC 51484 / DSM 6875 / VKM B-1610 / KT) protein is Chaperone protein HtpG.